Consider the following 1443-residue polypeptide: Lysophospholipase NTE1 (1443 aa).

The Lumenal segment spans residues 1-59; the sequence is MEEELAIEDLPRLTGTVSLNNGLLHSIYNETTVFKILRWSLVEIPKYILKLMSKNLEIN. Residues 60 to 80 form a helical membrane-spanning segment; sequence LNVSSILIITLLIAAGILVIV. At 81–1443 the chain is on the cytoplasmic side; the sequence is RYKFLTGYSE…RIKMYRRNTM (1363 aa). Polar residues predominate over residues 103-118; that stretch reads ALGQQSTNYPKSTSSG. 2 disordered regions span residues 103-122 and 199-251; these read ALGQ…LFVE and KYDE…GKMH. Positions 210–235 are enriched in acidic residues; it reads EGEEADEDDEEEEKEVGDDGDDEMDV. A nucleoside 3',5'-cyclic phosphate-binding positions include 619 to 750 and 746 to 871; these read LYKR…LKSL and KLKS…VASK. Residues 1136 to 1300 form the PNPLA domain; it reads LVLGGGGSRG…LDNLPVMEMK (165 aa). The GXGXXG signature appears at 1140–1145; sequence GGGSRG. The GXSXG motif lies at 1167–1171; it reads GTSIG. Residue S1169 is the Nucleophile of the active site. The active-site Proton acceptor is D1287. Residues 1287-1289 carry the DGA/G motif; that stretch reads DGG.

This sequence belongs to the NTE family.

The protein resides in the endoplasmic reticulum membrane. It carries out the reaction a 1-acyl-sn-glycero-3-phosphocholine + H2O = sn-glycerol 3-phosphocholine + a fatty acid + H(+). Its activity is regulated as follows. Inhibited by organophosphorus esters. Functionally, intracellular phospholipase B that catalyzes the double deacylation of phosphatidylcholine (PC) to glycerophosphocholine (GroPCho). Plays an important role in membrane lipid homeostasis. Responsible for the rapid PC turnover in response to inositol, elevated temperatures, or when choline is present in the growth medium. The polypeptide is Lysophospholipase NTE1 (NTE1) (Lodderomyces elongisporus (strain ATCC 11503 / CBS 2605 / JCM 1781 / NBRC 1676 / NRRL YB-4239) (Yeast)).